We begin with the raw amino-acid sequence, 366 residues long: Alcohol dehydrogenase (366 aa).

Zn(2+)-binding residues include C41, H62, E63, and D167.

This sequence belongs to the zinc-containing alcohol dehydrogenase family. As to quaternary structure, homotetramer. The cofactor is Zn(2+).

The enzyme catalyses a primary alcohol + NAD(+) = an aldehyde + NADH + H(+). It catalyses the reaction a secondary alcohol + NAD(+) = a ketone + NADH + H(+). It carries out the reaction (R,R)-butane-2,3-diol + NAD(+) = (R)-acetoin + NADH + H(+). The catalysed reaction is an aldehyde + NAD(+) + H2O = a carboxylate + NADH + 2 H(+). In terms of biological role, multifunctional alcohol dehydrogenase exhibiting NAD(+)-dependent dehydrogenase activities for 2,3-butanediol, ethanol and acetaldehyde, and reductase activities for acetoin (NADH-dependent), and diacetyl and acetaldehyde (independently of whether NADH or NADPH is the reductant). The rate of oxidation of 2,3-butanediol is much higher than for the oxidation of ethanol. Has acetaldehyde dehydrogenase activity leading to acetate formation. May function in the release of excess reducing power in the absence of exogenous hydrogen acceptors such as oxygen. This chain is Alcohol dehydrogenase (adh), found in Cupriavidus necator (Alcaligenes eutrophus).